The sequence spans 83 residues: Cytochrome b559 subunit alpha (83 aa).

The helical transmembrane segment at 21 to 35 (VIHSITIPSLFIAGW) threads the bilayer. His23 is a binding site for heme.

The protein belongs to the PsbE/PsbF family. Heterodimer of an alpha subunit and a beta subunit. PSII is composed of 1 copy each of membrane proteins PsbA, PsbB, PsbC, PsbD, PsbE, PsbF, PsbH, PsbI, PsbJ, PsbK, PsbL, PsbM, PsbT, PsbX, PsbY, PsbZ, Psb30/Ycf12, at least 3 peripheral proteins of the oxygen-evolving complex and a large number of cofactors. It forms dimeric complexes. Heme b serves as cofactor.

It localises to the plastid. It is found in the chloroplast thylakoid membrane. Functionally, this b-type cytochrome is tightly associated with the reaction center of photosystem II (PSII). PSII is a light-driven water:plastoquinone oxidoreductase that uses light energy to abstract electrons from H(2)O, generating O(2) and a proton gradient subsequently used for ATP formation. It consists of a core antenna complex that captures photons, and an electron transfer chain that converts photonic excitation into a charge separation. In Chaetosphaeridium globosum (Charophycean green alga), this protein is Cytochrome b559 subunit alpha.